A 67-amino-acid chain; its full sequence is Type 3 secretion system chaperone PscE (67 aa).

The stretch at 16–37 (HAAALRQRLQAALAECRRELAR) forms a coiled coil.

The protein belongs to the YscE family. As to quaternary structure, forms a stable ternary complex with PscF/SctF and PscG within the cytoplasm. Co-stabilized by PscG.

The protein resides in the cytoplasm. Its function is as follows. Chaperone of the type III secretion system (T3SS), also called injectisome, which is used to inject bacterial effector proteins into eukaryotic host cells, facilitating the establishment and dissemination of infection. Along with PscG, prevents premature polymerization of the PscF/SctF needle protein within the cytoplasm. Required for type III secretion needle assembly. Also required for cytotoxicity by influencing PscF/SctF levels. In Pseudomonas aeruginosa (strain ATCC 15692 / DSM 22644 / CIP 104116 / JCM 14847 / LMG 12228 / 1C / PRS 101 / PAO1), this protein is Type 3 secretion system chaperone PscE (pscE).